We begin with the raw amino-acid sequence, 355 residues long: cGAMP-activated phospholipase (355 aa).

Residues 17–214 (LSLNGGGARG…VANNPSFIGL (198 aa)) form the PNPLA domain. A GXGXXG motif is present at residues 21 to 26 (GGGARG). Positions 60 to 64 (GTSIG) match the GXSXG motif. Catalysis depends on S62, which acts as the Nucleophile. D201 (proton acceptor) is an active-site residue. Residues 201-203 (DGG) carry the DGA/G motif.

The protein belongs to the patatin family.

It carries out the reaction a 1,2-diacyl-sn-glycero-3-phosphocholine + H2O = a 2-acyl-sn-glycero-3-phosphocholine + a fatty acid + H(+). The catalysed reaction is 1,2-di-(9Z-octadecenoyl)-sn-glycero-3-phosphoethanolamine + 2 H2O = sn-glycero-3-phosphoethanolamine + 2 (9Z)-octadecenoate + 2 H(+). With respect to regulation, phospholipase activity is specifically activated upon 3',3'-cGAMP (cGAMP) binding. Is not activated by the other cyclic dinucleotides 3',3'-cUAMP, 3',3'-c-diAMP and 3',3'-c-diGMP. Therefore, is specifically activated by only the nucleotide synthesized from its adjacently encoded nucleotidyltransferase (DncV). The cGAMP-activation of lipase is inhibited by T4 phage protein Acb2 (Vs.4). Its function is as follows. Effector phospholipase of a CBASS antiviral system. CBASS (cyclic oligonucleotide-based antiphage signaling system) provides immunity against bacteriophages. The CD-NTase protein (DncV) synthesizes cyclic nucleotides in response to infection; these serve as specific second messenger signals. The signals activate a diverse range of effectors, leading to bacterial cell death and thus abortive phage infection. A type II-A(GA) CBASS system. Functionally, phospholipase that is activated upon binding to the cyclic dinucleotide (CDN) second messenger 3',3'-cyclic GMP-AMP (3',3'-cGAMP). Then degrades phosphatidylethanolamine (PE) and phosphatidylglycerol (PG), the major phospholipids in the cell membrane of V.cholerae, releasing 16:1 and 18:1 free fatty acids. Upon expression in E.coli with cognate DncV, the cell inner membrane shrinks and separates from the cell wall. Protects E.coli against phage infection. When the CBASS operon (capV-dncV-cap2-cap3) is introduced in E.coli MG1655 there is about 100-fold protection against phages P1 and T2. When the operon is introduced in E.coli MG1655 there is a more than 10(3) decrease in the efficiency of T2 plaque formation. Protects 100-fold against phage T5, offers no protection against T7. When the operon is introduced in E.coli MG1655 it protects against phages T2, T4, T5 and T6. Another paper shows the operon confers protection against phages P1, T2, T5 and T6 but not T4 or lambda. This is cGAMP-activated phospholipase from Vibrio cholerae serotype O1 (strain ATCC 39315 / El Tor Inaba N16961).